The following is a 320-amino-acid chain: D-amino-acid oxidase (320 aa).

Residues Gly18, Gly19, Val20, Ile21, Thr47, Thr48, Ser49, Gly53, Gly54, Leu55, Val161, and Thr176 each contribute to the FAD site. Residues Tyr220 and Arg275 each contribute to the D-proline site. D-serine contacts are provided by Tyr220 and Arg275. Positions 275, 301, 302, 304, and 306 each coordinate FAD. Gly302 lines the D-proline pocket. Residue Gly302 participates in D-serine binding.

It belongs to the DAMOX/DASOX family. The cofactor is FAD.

The protein resides in the cytoplasm. It localises to the secreted. Its subcellular location is the cell wall. The enzyme catalyses a D-alpha-amino acid + O2 + H2O = a 2-oxocarboxylate + H2O2 + NH4(+). It catalyses the reaction D-leucine + O2 + H2O = 4-methyl-2-oxopentanoate + H2O2 + NH4(+). It carries out the reaction D-valine + O2 + H2O = 3-methyl-2-oxobutanoate + H2O2 + NH4(+). The catalysed reaction is D-isoleucine + O2 + H2O = (R)-3-methyl-2-oxopentanoate + H2O2 + NH4(+). The enzyme catalyses D-methionine + O2 + H2O = 4-methylsulfanyl-2-oxobutanoate + H2O2 + NH4(+). Catalyzes the oxidative deamination of D-amino acids with broad substrate specificity. The protein is D-amino-acid oxidase of Streptomyces coelicolor (strain ATCC BAA-471 / A3(2) / M145).